The primary structure comprises 638 residues: Asparagine--tRNA ligase, cytoplasmic 2 (638 aa).

Residues 1 to 16 (MESHGKTHQKEHDNDL) are compositionally biased toward basic and acidic residues. Disordered stretches follow at residues 1–23 (MESH…PITL) and 62–87 (VKKN…DQAH).

Belongs to the class-II aminoacyl-tRNA synthetase family.

Its subcellular location is the cytoplasm. The protein resides in the cytosol. The catalysed reaction is tRNA(Asn) + L-asparagine + ATP = L-asparaginyl-tRNA(Asn) + AMP + diphosphate + H(+). The sequence is that of Asparagine--tRNA ligase, cytoplasmic 2 from Arabidopsis thaliana (Mouse-ear cress).